Here is a 427-residue protein sequence, read N- to C-terminus: Inward rectifier potassium channel 2 (427 aa).

Topologically, residues 1 to 81 are cytoplasmic; that stretch reads MGSVRTNRYS…IFTTCVDIRW (81 aa). The helical transmembrane segment at 82-106 threads the bilayer; it reads RWMLVIFCLTFILSWLFFGCVFWLI. Residues 107 to 128 lie on the Extracellular side of the membrane; it reads ALLHGDLENQENNKPCVSQVSS. The helical; Pore-forming intramembrane region spans 129 to 140; that stretch reads FTAAFLFSIETQ. Residues 141 to 147 constitute an intramembrane region (pore-forming); sequence TTIGYGF. The Selectivity filter motif lies at 142-147; that stretch reads TIGYGF. At 148-156 the chain is on the extracellular side; it reads RCVTDECPI. A helical membrane pass occupies residues 157 to 178; that stretch reads AVFMVVFQSIVGCIIDAFIIGA. At 179 to 427 the chain is on the cytoplasmic side; it reads VMAKMAKPKK…PRPLRRESEI (249 aa). A polyphosphoinositide (PIP2)-binding region spans residues 181 to 208; that stretch reads AKMAKPKKRNETLVFSHNAVVAMRDGKL. Residues 386 to 427 are disordered; that stretch reads EEDEIDTGVPESTSTDTHPDMDHHNQAGVPLEPRPLRRESEI. The PDZ-binding signature appears at 425–427; that stretch reads SEI.

It belongs to the inward rectifier-type potassium channel (TC 1.A.2.1) family. KCNJ2 subfamily. In terms of assembly, homotetramer. Homomultimeric and heteromultimeric association with KCNJ4/Kir2.3, resulting in an enhanced G-protein-induced current. Associates, via its PDZ-recognition domain, with a complex containing LIN7A, LIN7B, LIN7C, DLG1, CASK and APBA1. Found in the apical basilar papilla of the inner ear, brain, muscle, cerebellum, heart and liver.

It is found in the cell membrane. The protein localises to the sarcolemma. It localises to the T-tubule. It carries out the reaction K(+)(in) = K(+)(out). Activated by phosphatidylinositol 4,5 biphosphate (PtdIns(4,5)P2). Its function is as follows. Inward rectifier potassium channels are characterized by a greater tendency to allow potassium to flow into the cell rather than out of it. Their voltage dependence is regulated by the concentration of extracellular potassium; as external potassium is raised, the voltage range of the channel opening shifts to more positive voltages. The inward rectification is mainly due to the blockage of outward current by internal magnesium. Can be blocked by external barium. Probably participates in establishing action potential waveform and excitability of neuronal and muscle tissues. The polypeptide is Inward rectifier potassium channel 2 (KCNJ2) (Gallus gallus (Chicken)).